Reading from the N-terminus, the 1282-residue chain is MVAPISYLTLYNAHNGDSVKIPKPIRFHSLNGLKSFIHESFTDYIISDIENIFLLTSFGMKVKFNIINELNDIYVFDKRLFSGARDETIINAYVNQNEGGYKEMIKPTPSSLVKLEKTNIKQMTSSLKVNDGWSKALFQDCLGVVGQMKAYVKQINTIFKCLNIIFQFGSNFINGIEKSFNNYLNYIKLLNLKTLHRSWNGYYNNLRKFPSFQLKNGTGNIKISDHLNTSELEKSSSFVSKTLPLVINKFNEMSASINSVNDDKVNVDKLIESLRNESIENFKDYDTGSEDIIKDVSRLSQLISHDIDKLSTNVSISLDWVYRIHKDEISPKIFDKATGLYKILQNLYLFKNKIVDESLSIFGKIANLQMRMVNIKNDLRILTNADDNNDIANENEISIHVINNIKSAEDYLSLTIDLPLLFGFMLIEKRRQFEWHEFYSKGIVNNVSEQLSVIIDHEKIFRKLWLKKFGNFLSILNSKDENDALRTVLPSIDVTLVNGNAESNSTFGIINNIQVERDDISTYINALEEYSNAGTTSSPSSKKFSELMKKNFQDLIKCTNNMKRVTKMVSSLSSFTSPVANEIKNNDKLLANSKDENNDKQAEGGGHMSELGEVDYDINLVKGLKIRIRKLENLLHQQQYKDLSNWPVTRSNGANATSTSETDGKFSLILDSNQKTSTSSNSKIDPTNLLQRRQTLPLKLGHEKPTTSQQSNHLDVSTTIDKHLDNIRLKKENNELTNENLKLSNTNRTNEKLIEALNKQISNLKTVNDDQNKHHEEKLRKRDAENQQTITRLETELQAFKPQNNKEVVDLKDKLSLRDAEILDLRKDITRLHDVNEGFTEEVTKLNEKIATLQSDINDVNAMKKDLLSNMASKETDTINHRISLEEEIKKLHSKIEELTEDYENLMDLTQSKHNNLDIMVNYLNNMIIHLLSSIKCLVEQQFETFIEFCFILESMGLLLIKEHNNNKNLDEYKITRVKGLKSKRNDKIVPTSANGNVLDETPIVSTMGNMPTSKVVDDINKIIGWVDDIQSFKNISTKSSEDGDEKSCSANTAGSVSSSVIDDLPEEITNLSVEETNKFNRQSLELVKLFRDIFKSSNGSISKFEDFINTIRFKENICINQNQDDSGVSNKFFLGAITKRFKDVEGFAKKLTKENKSKAHELSQLIGKLNCKISMNSFEMDDLVLFLPTRIDRAEEIDENFQPWAAFNIGAPHYFLRVQKNEGNKTGITHSIKDKEWMVGRVTYIEEHTVTDANFNDKDANPFHLSTGVVWYVVDAKEEIF.

3 coiled-coil regions span residues 579–641 (VANE…QQYK), 722–799 (KHLD…ELQA), and 834–917 (DVNE…HNNL). A disordered region spans residues 586 to 609 (NDKLLANSKDENNDKQAEGGGHMS). The span at 593-602 (SKDENNDKQA) shows a compositional bias: basic and acidic residues.

Belongs to the ATG11 family. In terms of assembly, homodimer.

It is found in the preautophagosomal structure membrane. Its subcellular location is the vacuole membrane. Functionally, involved in cytoplasm to vacuole transport (Cvt), pexophagy, mitophagy and nucleophagy. Recruits mitochondria for their selective degradation via autophagy (mitophagy) during starvation. Works as scaffold proteins that recruit ATG proteins to the pre-autophagosome (PAS), the site of vesicle/autophagosome formation. Required for the Cvt vesicles completion. The protein is Autophagy-related protein 11 (ATG11) of Debaryomyces hansenii (strain ATCC 36239 / CBS 767 / BCRC 21394 / JCM 1990 / NBRC 0083 / IGC 2968) (Yeast).